A 479-amino-acid polypeptide reads, in one-letter code: Citrate synthase, mitochondrial (479 aa).

Residues 1–37 (MSAILSTTSKSFLSRGSTRQCQNMQKALFALLNARHY) constitute a mitochondrion transit peptide. Catalysis depends on residues His312, His358, and Asp413. Phosphoserine is present on Ser462.

Belongs to the citrate synthase family. In terms of assembly, monomer and homodimer. Exists as an inactive monomer when phosphorylated. Homodimerization is dependent on dephosphorylation of Ser-462 by PTC7 and is required for activity. Phosphorylation at Ser-462. Dephosphorylated at Ser-462 by PTC7.

It localises to the mitochondrion matrix. The catalysed reaction is oxaloacetate + acetyl-CoA + H2O = citrate + CoA + H(+). Its pathway is carbohydrate metabolism; tricarboxylic acid cycle; isocitrate from oxaloacetate: step 1/2. With respect to regulation, phosphorylation at Ser-462 inhibits catalytic activity. Dephosphorylation at Ser-462 by PTC7 enhances catalytic activity. Functionally, specific citrate synthase with catalytic activity only with acetyl-CoA. This Saccharomyces cerevisiae (strain ATCC 204508 / S288c) (Baker's yeast) protein is Citrate synthase, mitochondrial.